The following is a 451-amino-acid chain: Glycylpeptide N-tetradecanoyltransferase (451 aa).

Tetradecanoyl-CoA contacts are provided by residues 177–179 (LCI) and 185–189 (NKRLA). The active-site Proton acceptor; via carboxylate is Leu451.

It belongs to the NMT family. As to quaternary structure, monomer.

It localises to the cytoplasm. It catalyses the reaction N-terminal glycyl-[protein] + tetradecanoyl-CoA = N-tetradecanoylglycyl-[protein] + CoA + H(+). Competitively inhibited by SC-58272, a peptidomimetic derived from the N-terminal sequence of a natural substrate. In terms of biological role, adds a myristoyl group to the N-terminal glycine residue of certain cellular proteins. Substrate specificity requires an N-terminal glycine in the nascent polypeptide substrates. Ser is present at position 5 in almost all known N-myristoyl proteins and Lys is commonly encountered at postion 6. Basic residues are preferred at positions 7 and 8. In Candida albicans (strain SC5314 / ATCC MYA-2876) (Yeast), this protein is Glycylpeptide N-tetradecanoyltransferase (NMT1).